Consider the following 360-residue polypeptide: UDP-N-acetylglucosamine--N-acetylmuramyl-(pentapeptide) pyrophosphoryl-undecaprenol N-acetylglucosamine transferase (360 aa).

UDP-N-acetyl-alpha-D-glucosamine is bound by residues 13–15, asparagine 125, arginine 164, serine 191, and glutamine 290; that span reads TGG.

Belongs to the glycosyltransferase 28 family. MurG subfamily.

It is found in the cell inner membrane. The catalysed reaction is di-trans,octa-cis-undecaprenyl diphospho-N-acetyl-alpha-D-muramoyl-L-alanyl-D-glutamyl-meso-2,6-diaminopimeloyl-D-alanyl-D-alanine + UDP-N-acetyl-alpha-D-glucosamine = di-trans,octa-cis-undecaprenyl diphospho-[N-acetyl-alpha-D-glucosaminyl-(1-&gt;4)]-N-acetyl-alpha-D-muramoyl-L-alanyl-D-glutamyl-meso-2,6-diaminopimeloyl-D-alanyl-D-alanine + UDP + H(+). It participates in cell wall biogenesis; peptidoglycan biosynthesis. Its function is as follows. Cell wall formation. Catalyzes the transfer of a GlcNAc subunit on undecaprenyl-pyrophosphoryl-MurNAc-pentapeptide (lipid intermediate I) to form undecaprenyl-pyrophosphoryl-MurNAc-(pentapeptide)GlcNAc (lipid intermediate II). The polypeptide is UDP-N-acetylglucosamine--N-acetylmuramyl-(pentapeptide) pyrophosphoryl-undecaprenol N-acetylglucosamine transferase (Hahella chejuensis (strain KCTC 2396)).